Consider the following 368-residue polypeptide: Propane 2-monooxygenase, hydroxylase component small subunit (368 aa).

Positions 1–33 (MSAPAQPRERSFPSIEFTDAEADAREFPSSRSR) are disordered.

This sequence belongs to the TmoE/XamoE family. The propane 2-monooxygenase multicomponent enzyme system is composed of an electron transfer component and a monooxygenase component interacting with the effector protein PrmD. The electron transfer component is composed of a reductase (PrmB), and the monooxygenase component is formed by a large subunit (PrmA) and a small subunit (PrmC). Probably requires the presence of the chaperonin-like protein PrmG to ensure a productive folding, resulting of a soluble PrmC, which leads to the active form of PrmABCD.

The enzyme catalyses propane + NADH + O2 + H(+) = propan-2-ol + NAD(+) + H2O. The catalysed reaction is phenol + NADH + O2 + H(+) = hydroquinone + NAD(+) + H2O. Its function is as follows. Component of the propane 2-monooxygenase multicomponent enzyme system which is involved in the degradation of propane via the O2-dependent hydroxylation of propane. Under acetone induction, also able to catalyze the oxidation of phenol to yield hydroquinone. This Gordonia sp. (strain TY-5) protein is Propane 2-monooxygenase, hydroxylase component small subunit.